The following is a 1160-amino-acid chain: ATP-dependent helicase/deoxyribonuclease subunit B (1160 aa).

It belongs to the helicase family. AddB/RexB type 2 subfamily. As to quaternary structure, heterodimer of AddA and RexB. Requires Mg(2+) as cofactor.

Functionally, the heterodimer acts as both an ATP-dependent DNA helicase and an ATP-dependent, dual-direction single-stranded exonuclease. Recognizes the chi site generating a DNA molecule suitable for the initiation of homologous recombination. This subunit has 5' -&gt; 3' nuclease activity but not helicase activity. The chain is ATP-dependent helicase/deoxyribonuclease subunit B from Lactobacillus helveticus (strain DPC 4571).